The primary structure comprises 246 residues: Sugar fermentation stimulation protein homolog (246 aa).

Belongs to the SfsA family.

This Prochlorococcus marinus (strain MIT 9215) protein is Sugar fermentation stimulation protein homolog.